The primary structure comprises 159 residues: Transcription antitermination protein NusB (159 aa).

This sequence belongs to the NusB family.

Functionally, involved in transcription antitermination. Required for transcription of ribosomal RNA (rRNA) genes. Binds specifically to the boxA antiterminator sequence of the ribosomal RNA (rrn) operons. In Xanthomonas axonopodis pv. citri (strain 306), this protein is Transcription antitermination protein NusB.